The primary structure comprises 359 residues: 5-formaminoimidazole-4-carboxamide-1-(beta)-D-ribofuranosyl 5'-monophosphate synthetase (359 aa).

Histidine 28 and serine 95 together coordinate 5-amino-1-(5-phospho-beta-D-ribosyl)imidazole-4-carboxamide. Residues 115-346 (ELMIWETDRD…MGRRIAREIK (232 aa)) form the ATP-grasp domain. Residues 144 to 206 (PEEI…ANIY) and glutamate 228 each bind ATP. Asparagine 256 provides a ligand contact to 5-amino-1-(5-phospho-beta-D-ribosyl)imidazole-4-carboxamide. Glutamate 295 and glutamate 308 together coordinate Mg(2+).

The protein belongs to the phosphohexose mutase family. Mg(2+) serves as cofactor. Mn(2+) is required as a cofactor.

It carries out the reaction 5-amino-1-(5-phospho-beta-D-ribosyl)imidazole-4-carboxamide + formate + ATP = 5-formamido-1-(5-phospho-D-ribosyl)imidazole-4-carboxamide + ADP + phosphate. The protein operates within purine metabolism; IMP biosynthesis via de novo pathway; 5-formamido-1-(5-phospho-D-ribosyl)imidazole-4-carboxamide from 5-amino-1-(5-phospho-D-ribosyl)imidazole-4-carboxamide (formate route): step 1/1. Its function is as follows. Catalyzes the ATP- and formate-dependent formylation of 5-aminoimidazole-4-carboxamide-1-beta-d-ribofuranosyl 5'-monophosphate (AICAR) to 5-formaminoimidazole-4-carboxamide-1-beta-d-ribofuranosyl 5'-monophosphate (FAICAR) in the absence of folates. This chain is 5-formaminoimidazole-4-carboxamide-1-(beta)-D-ribofuranosyl 5'-monophosphate synthetase, found in Archaeoglobus fulgidus (strain ATCC 49558 / DSM 4304 / JCM 9628 / NBRC 100126 / VC-16).